Reading from the N-terminus, the 233-residue chain is Coproporphyrinogen-III oxidase 2, chloroplastic (233 aa).

A chloroplast-targeting transit peptide spans 1–48; sequence MASHSSTLFTSPSSFILFSSHRLKSSPNYFTYHFPRSVKRPHFDLRCS. S174 lines the substrate pocket. The active-site Proton donor is H188.

This sequence belongs to the aerobic coproporphyrinogen-III oxidase family. In terms of assembly, homodimer.

It localises to the plastid. The protein localises to the chloroplast. The catalysed reaction is coproporphyrinogen III + O2 + 2 H(+) = protoporphyrinogen IX + 2 CO2 + 2 H2O. It functions in the pathway porphyrin-containing compound metabolism; protoporphyrin-IX biosynthesis; protoporphyrinogen-IX from coproporphyrinogen-III (O2 route): step 1/1. It participates in porphyrin-containing compound metabolism; chlorophyll biosynthesis. Key enzyme in heme biosynthesis. Catalyzes the oxidative decarboxylation of propionic acid side chains of rings A and B of coproporphyrinogen III. This Arabidopsis thaliana (Mouse-ear cress) protein is Coproporphyrinogen-III oxidase 2, chloroplastic (CPX2).